The following is a 1458-amino-acid chain: Secretory phospholipase A2 receptor (1458 aa).

The N-terminal stretch at 1-23 is a signal peptide; the sequence is MLLSLLLLLLLGAPRRCTEGAAA. The Extracellular portion of the chain corresponds to 24 to 1393; the sequence is ALSPERVLKW…EHPGKGPSHS (1370 aa). 17 disulfides stabilise this stretch: Cys-49-Cys-62, Cys-87-Cys-104, Cys-176-Cys-202, Cys-190-Cys-217, Cys-258-Cys-352, Cys-328-Cys-344, Cys-404-Cys-499, Cys-476-Cys-491, Cys-615-Cys-632, Cys-697-Cys-794, Cys-772-Cys-786, Cys-838-Cys-935, Cys-912-Cys-927, Cys-1065-Cys-1085, Cys-1207-Cys-1221, Cys-1278-Cys-1373, and Cys-1350-Cys-1365. The 65-residue stretch at 49–113 folds into the Ricin B-type lectin domain; that stretch reads CIQAGKSVLT…CDSTHVSLRW (65 aa). Residue Asn-91 is glycosylated (N-linked (GlcNAc...) asparagine). The 49-residue stretch at 171-219 folds into the Fibronectin type-II domain; it reads AHGTPCMFPFQYNHQWHHECTREGRQDDSLWCATTSRYERDEKWGFCPD. C-type lectin domains are found at residues 227–356, 374–502, 511–645, 660–798, 815–939, 954–1098, 1117–1231, and 1243–1376; these read CDAV…KKYL, TDCE…CKKP, SGCQ…KQPV, HPCY…KIPR, LFHQ…KRKT, GTCP…EKIQ, LEYG…AICH, and ELCS…CKMK. N-linked (GlcNAc...) asparagine glycosylation is found at Asn-408, Asn-431, and Asn-452. The chain crosses the membrane as a helical span at residues 1394-1416; the sequence is IVPLAVALTLVVILAIITLSFYI. Topologically, residues 1417 to 1458 are cytoplasmic; it reads YKQNKGFFRRLAGVGNSYYPTTNFSTIHLEENILISDLEKND. The Endocytosis signal motif lies at 1432–1438; sequence NSYYPTT.

As to quaternary structure, interacts with sPLA2-IB/PLA2G1B; this interaction mediates intracellular signaling as well as clearance of extracellular sPLA2-IB/PLA2G1B via endocytotic pathway. Interacts with sPLA2-X/PLA2G10; this interaction mediates sPLA2-X/PLA2G10 clearance and inactivation. The secretory phospholipase A2 receptor form may be produced by the action of metalloproteinases. It contains all extracellular domains and only lacks transmembrane and cytosolic regions. It is however unclear whether this form is produced by proteolytic cleavage as suggested by some experiments, or by alternative splicing. As to expression, lung, skeletal muscle, brain, kidney and heart.

It localises to the cell membrane. It is found in the secreted. Receptor for secretory phospholipase A2 (sPLA2). Also able to bind to snake PA2-like toxins. Although its precise function remains unclear, binding of sPLA2 to its receptor participates in both positive and negative regulation of sPLA2 functions as well as clearance of sPLA2. Binding of sPLA2-IB/PLA2G1B induces various effects depending on the cell type, such as activation of the mitogen-activated protein kinase (MAPK) cascade to induce cell proliferation, the production of lipid mediators, selective release of arachidonic acid in bone marrow-derived mast cells. In neutrophils, binding of sPLA2-IB/PLA2G1B can activate p38 MAPK to stimulate elastase release and cell adhesion. May be involved in responses in pro-inflammatory cytokine productions during endotoxic shock. Also has endocytic properties and rapidly internalizes sPLA2 ligands, which is particularly important for the clearance of extracellular sPLA2s to protect their potent enzymatic activities. The soluble secretory phospholipase A2 receptor form is circulating and acts as a negative regulator of sPLA2 functions by blocking the biological functions of sPLA2-IB/PLA2G1B and sPLA2-X/PLA2G10. This is Secretory phospholipase A2 receptor (PLA2R1) from Oryctolagus cuniculus (Rabbit).